We begin with the raw amino-acid sequence, 543 residues long: Splicing factor U2af large subunit B (543 aa).

Positions 1 to 10 (MADDNGGGGD) are enriched in gly residues. Residues 1–171 (MADDNGGGGD…IPTPSQLPGS (171 aa)) are disordered. 2 stretches are compositionally biased toward basic and acidic residues: residues 17–78 (VRPE…DRDR) and 88–114 (EHRDRPDDHDRHRSRDSERRRDRERDG). The span at 115-126 (HRRHRSRSRSRS) shows a compositional bias: basic residues. RRM domains are found at residues 207–290 (RRVY…RPTD), 327–405 (DRIF…RANQ), and 446–532 (QVVT…YPEN).

Belongs to the splicing factor SR family.

It is found in the nucleus. Necessary for the splicing of pre-mRNA. The sequence is that of Splicing factor U2af large subunit B (U2AF65B) from Triticum aestivum (Wheat).